We begin with the raw amino-acid sequence, 183 residues long: ATP synthase subunit delta (183 aa).

The protein belongs to the ATPase delta chain family. As to quaternary structure, F-type ATPases have 2 components, F(1) - the catalytic core - and F(0) - the membrane proton channel. F(1) has five subunits: alpha(3), beta(3), gamma(1), delta(1), epsilon(1). F(0) has three main subunits: a(1), b(2) and c(10-14). The alpha and beta chains form an alternating ring which encloses part of the gamma chain. F(1) is attached to F(0) by a central stalk formed by the gamma and epsilon chains, while a peripheral stalk is formed by the delta and b chains.

It is found in the cell inner membrane. In terms of biological role, f(1)F(0) ATP synthase produces ATP from ADP in the presence of a proton or sodium gradient. F-type ATPases consist of two structural domains, F(1) containing the extramembraneous catalytic core and F(0) containing the membrane proton channel, linked together by a central stalk and a peripheral stalk. During catalysis, ATP synthesis in the catalytic domain of F(1) is coupled via a rotary mechanism of the central stalk subunits to proton translocation. Functionally, this protein is part of the stalk that links CF(0) to CF(1). It either transmits conformational changes from CF(0) to CF(1) or is implicated in proton conduction. The sequence is that of ATP synthase subunit delta from Syntrophobacter fumaroxidans (strain DSM 10017 / MPOB).